A 264-amino-acid chain; its full sequence is Methylthioribulose-1-phosphate dehydratase (264 aa).

Cys-110 contacts substrate. Residues His-128 and His-130 each contribute to the Zn(2+) site. Glu-151 functions as the Proton donor/acceptor in the catalytic mechanism. Residue His-213 coordinates Zn(2+).

It belongs to the aldolase class II family. MtnB subfamily. The cofactor is Zn(2+).

It is found in the cytoplasm. The catalysed reaction is 5-(methylsulfanyl)-D-ribulose 1-phosphate = 5-methylsulfanyl-2,3-dioxopentyl phosphate + H2O. Its pathway is amino-acid biosynthesis; L-methionine biosynthesis via salvage pathway; L-methionine from S-methyl-5-thio-alpha-D-ribose 1-phosphate: step 2/6. Functionally, catalyzes the dehydration of methylthioribulose-1-phosphate (MTRu-1-P) into 2,3-diketo-5-methylthiopentyl-1-phosphate (DK-MTP-1-P). In Vanderwaltozyma polyspora (strain ATCC 22028 / DSM 70294 / BCRC 21397 / CBS 2163 / NBRC 10782 / NRRL Y-8283 / UCD 57-17) (Kluyveromyces polysporus), this protein is Methylthioribulose-1-phosphate dehydratase.